Consider the following 234-residue polypeptide: Leucyl/phenylalanyl-tRNA--protein transferase (234 aa).

Belongs to the L/F-transferase family.

It is found in the cytoplasm. It catalyses the reaction N-terminal L-lysyl-[protein] + L-leucyl-tRNA(Leu) = N-terminal L-leucyl-L-lysyl-[protein] + tRNA(Leu) + H(+). The enzyme catalyses N-terminal L-arginyl-[protein] + L-leucyl-tRNA(Leu) = N-terminal L-leucyl-L-arginyl-[protein] + tRNA(Leu) + H(+). The catalysed reaction is L-phenylalanyl-tRNA(Phe) + an N-terminal L-alpha-aminoacyl-[protein] = an N-terminal L-phenylalanyl-L-alpha-aminoacyl-[protein] + tRNA(Phe). Functions in the N-end rule pathway of protein degradation where it conjugates Leu, Phe and, less efficiently, Met from aminoacyl-tRNAs to the N-termini of proteins containing an N-terminal arginine or lysine. The sequence is that of Leucyl/phenylalanyl-tRNA--protein transferase from Hahella chejuensis (strain KCTC 2396).